A 288-amino-acid chain; its full sequence is Nucleotide-binding protein Gura_2968 (288 aa).

Position 8–15 (8–15 (GLSGSGKS)) interacts with ATP. A GTP-binding site is contributed by 59–62 (DIRG).

The protein belongs to the RapZ-like family.

Displays ATPase and GTPase activities. This chain is Nucleotide-binding protein Gura_2968, found in Geotalea uraniireducens (strain Rf4) (Geobacter uraniireducens).